Reading from the N-terminus, the 139-residue chain is Putative pre-16S rRNA nuclease (139 aa).

The protein belongs to the YqgF nuclease family.

Its subcellular location is the cytoplasm. Its function is as follows. Could be a nuclease involved in processing of the 5'-end of pre-16S rRNA. This is Putative pre-16S rRNA nuclease from Dictyoglomus thermophilum (strain ATCC 35947 / DSM 3960 / H-6-12).